Here is a 552-residue protein sequence, read N- to C-terminus: Membrane protein insertase YidC (552 aa).

Residues 3-23 (IKRTVLWVIFFMSAVMLFDNW) form a helical membrane-spanning segment. Residues 35–59 (PSATPTKTVGSAAPGTTTPGTQPAD) are disordered. Low complexity predominate over residues 42-59 (TVGSAAPGTTTPGTQPAD). 3 helical membrane-spanning segments follow: residues 364-384 (WGWS…PLSA), 430-450 (FGGC…YWVL), and 504-524 (MMFM…GLVL).

Belongs to the OXA1/ALB3/YidC family. Type 1 subfamily. In terms of assembly, interacts with the Sec translocase complex via SecD. Specifically interacts with transmembrane segments of nascent integral membrane proteins during membrane integration.

Its subcellular location is the cell inner membrane. Its function is as follows. Required for the insertion and/or proper folding and/or complex formation of integral membrane proteins into the membrane. Involved in integration of membrane proteins that insert both dependently and independently of the Sec translocase complex, as well as at least some lipoproteins. Aids folding of multispanning membrane proteins. The chain is Membrane protein insertase YidC from Paraburkholderia phytofirmans (strain DSM 17436 / LMG 22146 / PsJN) (Burkholderia phytofirmans).